A 207-amino-acid polypeptide reads, in one-letter code: Serotype 2 fimbrial subunit (207 aa).

The signal sequence occupies residues 1–26; sequence MQIPFQRALRLCLRAALAAIASAAHA. A disulfide bond links C42 and C85.

This sequence belongs to the fimbrial protein family.

It localises to the fimbrium. Bordetella pertussis is the causative agent of whooping cough. An essential step in the disease process is the attachment of the bacteria to the ciliated epithelium of the respiratory tract, enabling the organism to resist normal host-clearance mechanisms. It is unclear which bacterial cell surface component are responsible for adherence but the fimbriae of B.pertussis are prime candidates for being involved in this process. This Bordetella pertussis (strain Tohama I / ATCC BAA-589 / NCTC 13251) protein is Serotype 2 fimbrial subunit (fim2).